A 458-amino-acid chain; its full sequence is Estrogen-related receptor gamma (458 aa).

Residue Lys-40 forms a Glycyl lysine isopeptide (Lys-Gly) (interchain with G-Cter in SUMO) linkage. The segment covering Glu-42–Ser-52 has biased composition (polar residues). Residues Glu-42–Tyr-85 form a disordered region. Ser-45 is modified (phosphoserine). The span at Ser-57–Ser-70 shows a compositional bias: low complexity. The nuclear receptor DNA-binding region spans Lys-125–Leu-200. 2 NR C4-type zinc fingers span residues Cys-128–Cys-148 and Cys-164–Cys-188. The region spanning Pro-233–Lys-457 is the NR LBD domain.

It belongs to the nuclear hormone receptor family. NR3 subfamily. Homodimer. Binds TLE1, PNRC1 and PNRC2. Binds GRIP1. Interacts with NRIP1, NCOA1 and NCOR2. Acetylated by PCAF/KAT2 (in vitro). Post-translationally, sumoylation on Lys-40 is enhanced by phosphorylation at Ser-45 and represses transcriptional activity. In terms of processing, phosphorylation on Ser-45 enhances sumoylation on Lys-40 thus repressing transcriptional activity. In terms of tissue distribution, expressed in the heart, kidney, brain, lung, bone marrow, adrenal gland, trachea, spinal cord and thyroid gland.

Its subcellular location is the nucleus. In terms of biological role, orphan receptor that acts as a transcription activator in the absence of bound ligand. Binds specifically to an estrogen response element and activates reporter genes controlled by estrogen response elements. Induces the expression of PERM1 in the skeletal muscle. This chain is Estrogen-related receptor gamma (ESRRG), found in Homo sapiens (Human).